The sequence spans 1081 residues: DNA-directed RNA polymerase subunit beta (1081 aa).

The protein belongs to the RNA polymerase beta chain family. As to quaternary structure, in plastids the minimal PEP RNA polymerase catalytic core is composed of four subunits: alpha, beta, beta', and beta''. When a (nuclear-encoded) sigma factor is associated with the core the holoenzyme is formed, which can initiate transcription.

It localises to the plastid. It is found in the chloroplast. The catalysed reaction is RNA(n) + a ribonucleoside 5'-triphosphate = RNA(n+1) + diphosphate. DNA-dependent RNA polymerase catalyzes the transcription of DNA into RNA using the four ribonucleoside triphosphates as substrates. The sequence is that of DNA-directed RNA polymerase subunit beta from Cyanidium caldarium (Red alga).